We begin with the raw amino-acid sequence, 34 residues long: TPFRYCNPRNCAKECQGRGKETTYCDEVCKCSGW.

3 disulfide bridges follow: Cys-6–Cys-25, Cys-11–Cys-29, and Cys-15–Cys-31.

It belongs to the short scorpion toxin superfamily. Potassium channel inhibitor family. Alpha-KTx 21 subfamily. In terms of tissue distribution, expressed by the venom gland.

It localises to the secreted. Toxin that blocks voltage-gated potassium channels (Kv). The sequence is that of Potassium channel toxin from Tityus metuendus (Scorpion).